A 1378-amino-acid chain; its full sequence is Roundabout homolog 2 (1378 aa).

The signal sequence occupies residues 1 to 21 (MSLLMFTQLLLCGFLYVRVDG). Over 22–859 (SRLRQEDFPP…EQITDVVKQP (838 aa)) the chain is Extracellular. Ig-like C2-type domains lie at 31–127 (PRIV…ASLE), 133–220 (DDFR…AELT), 225–309 (PTFL…ATLT), 314–409 (PQFV…LEVT), and 418–504 (PIIL…AVLD). Residues Cys52 and Cys110 are joined by a disulfide bond. N-linked (GlcNAc...) asparagine glycosylation occurs at Asn123. Cystine bridges form between Cys154–Cys203, Cys246–Cys293, and Cys335–Cys391. Residue Asn426 is glycosylated (N-linked (GlcNAc...) asparagine). Cys439 and Cys488 are joined by a disulfide. Fibronectin type-III domains lie at 524-618 (PPSK…TQDI), 637-735 (VLVR…TEEA), and 739-836 (PPQS…IGRR). Positions 603–625 (LSDPSPMSDPVRTQDISPPAQGV) are disordered. 4 N-linked (GlcNAc...) asparagine glycosylation sites follow: Asn752, Asn782, Asn789, and Asn845. A helical transmembrane segment spans residues 860-880 (AFIAGIGGACWVILMGFSIWL). Over 881-1378 (YWRRKKRKGL…NSQGQFTGEL (498 aa)) the chain is Cytoplasmic. 3 disordered regions span residues 1032–1084 (GFGY…PLPG), 1124–1156 (EDDD…LTPS), and 1215–1348 (DVAD…KTEV). A compositionally biased stretch (low complexity) spans 1058–1067 (SSKPQKNNGS). Over residues 1141–1155 (PAISFGQQSTATLTP) the composition is skewed to polar residues. Thr1154 carries the post-translational modification Phosphothreonine. Ser1156 carries the phosphoserine modification. Positions 1215 to 1228 (DVADDDADDEEEAL) are enriched in acidic residues. Residues 1240–1285 (TPGSSMDNLDSSVTGKAFTSSQRPRPTSPFSTDSNTSAALSQSQRP) show a composition bias toward polar residues. Low complexity predominate over residues 1319–1343 (SKPSFPSPGGHSSSGTASSKGSTGP).

This sequence belongs to the immunoglobulin superfamily. ROBO family. Interacts with SLIT2.

It is found in the membrane. Its function is as follows. Receptor for SLIT2, and probably SLIT1, which are thought to act as molecular guidance cue in cellular migration, including axonal navigation at the ventral midline of the neural tube and projection of axons to different regions during neuronal development. This chain is Roundabout homolog 2 (ROBO2), found in Homo sapiens (Human).